The primary structure comprises 527 residues: Glutamate--cysteine ligase (527 aa).

This sequence belongs to the glutamate--cysteine ligase type 1 family. Type 1 subfamily.

The enzyme catalyses L-cysteine + L-glutamate + ATP = gamma-L-glutamyl-L-cysteine + ADP + phosphate + H(+). The protein operates within sulfur metabolism; glutathione biosynthesis; glutathione from L-cysteine and L-glutamate: step 1/2. This is Glutamate--cysteine ligase from Bordetella parapertussis (strain 12822 / ATCC BAA-587 / NCTC 13253).